Here is a 388-residue protein sequence, read N- to C-terminus: Succinate--CoA ligase [ADP-forming] subunit beta (388 aa).

An ATP-grasp domain is found at 9–245 (KELLASYGLP…KSQENERELK (237 aa)). Residues Lys-46, 53-55 (GRG), Glu-100, Tyr-103, and Glu-108 each bind ATP. Residues Asn-200 and Asp-214 each coordinate Mg(2+). Residues Asn-265 and 322 to 324 (GIV) each bind substrate.

Belongs to the succinate/malate CoA ligase beta subunit family. Heterotetramer of two alpha and two beta subunits. Requires Mg(2+) as cofactor.

It catalyses the reaction succinate + ATP + CoA = succinyl-CoA + ADP + phosphate. It carries out the reaction GTP + succinate + CoA = succinyl-CoA + GDP + phosphate. The protein operates within carbohydrate metabolism; tricarboxylic acid cycle; succinate from succinyl-CoA (ligase route): step 1/1. Its function is as follows. Succinyl-CoA synthetase functions in the citric acid cycle (TCA), coupling the hydrolysis of succinyl-CoA to the synthesis of either ATP or GTP and thus represents the only step of substrate-level phosphorylation in the TCA. The beta subunit provides nucleotide specificity of the enzyme and binds the substrate succinate, while the binding sites for coenzyme A and phosphate are found in the alpha subunit. The sequence is that of Succinate--CoA ligase [ADP-forming] subunit beta from Neisseria meningitidis serogroup A / serotype 4A (strain DSM 15465 / Z2491).